The primary structure comprises 434 residues: Probable carboxypeptidase BDCG_03757 (434 aa).

The N-terminal stretch at 1–20 (MKLSHLAAALSAQLVAPVAA) is a signal peptide. Residues asparagine 136 and asparagine 150 are each glycosylated (N-linked (GlcNAc...) asparagine). Aspartate 160 contacts Zn(2+). Glutamate 192 (proton acceptor) is an active-site residue. Glutamate 193 contacts Zn(2+). The N-linked (GlcNAc...) asparagine glycan is linked to asparagine 343.

This sequence belongs to the peptidase M20A family. Zn(2+) is required as a cofactor.

It localises to the secreted. This chain is Probable carboxypeptidase BDCG_03757, found in Ajellomyces dermatitidis (strain ER-3 / ATCC MYA-2586) (Blastomyces dermatitidis).